A 568-amino-acid chain; its full sequence is Urease subunit alpha (568 aa).

The 439-residue stretch at 130 to 568 folds into the Urease domain; the sequence is GGIDTHIHFI…LPMAQRYFLF (439 aa). Positions 135, 137, and 218 each coordinate Ni(2+). N6-carboxylysine is present on lysine 218. A substrate-binding site is contributed by histidine 220. Positions 247 and 273 each coordinate Ni(2+). Histidine 321 serves as the catalytic Proton donor. Residue aspartate 361 coordinates Ni(2+).

It belongs to the metallo-dependent hydrolases superfamily. Urease alpha subunit family. Heterotrimer of UreA (gamma), UreB (beta) and UreC (alpha) subunits. Three heterotrimers associate to form the active enzyme. Ni cation serves as cofactor. Post-translationally, carboxylation allows a single lysine to coordinate two nickel ions.

The protein resides in the cytoplasm. It carries out the reaction urea + 2 H2O + H(+) = hydrogencarbonate + 2 NH4(+). The protein operates within nitrogen metabolism; urea degradation; CO(2) and NH(3) from urea (urease route): step 1/1. The polypeptide is Urease subunit alpha (Burkholderia mallei (strain NCTC 10247)).